The following is a 635-amino-acid chain: Frizzled and smoothened-like protein C (635 aa).

A signal peptide spans 1-20 (MKFKLIIFIIIIYIIKILKS). The Extracellular portion of the chain corresponds to 21 to 244 (EILNEFGYGL…NKWVQMYKMS (224 aa)). The FZ domain maps to 32-166 (DENLKCLSFI…LTKYGYTENN (135 aa)). Disulfide bonds link cysteine 37-cysteine 108 and cysteine 50-cysteine 101. N-linked (GlcNAc...) asparagine glycosylation is found at asparagine 65, asparagine 141, asparagine 156, asparagine 185, and asparagine 203. The helical transmembrane segment at 245–265 (IVLSTLSFICSIYNIITFGLL) threads the bilayer. Topologically, residues 266–275 (SKLKSKYNLC) are cytoplasmic. The chain crosses the membrane as a helical span at residues 276 to 296 (ITFFSVSTVLMSLMDIVTYGI). Over 297–314 (GYEELLCPESGRYAIQSD) the chain is Extracellular. A helical membrane pass occupies residues 315 to 335 (VACGVTGAFFHIGITTGVLWW). Residues 336–356 (TTMSICLYSEVKRFKMISFRY) lie on the Cytoplasmic side of the membrane. The chain crosses the membrane as a helical span at residues 357-377 (IIIFNSVISLILLIIPLSGQA). Residues 378 to 398 (FMSGNGSLGCWIRKTWYANGT) are Extracellular-facing. N-linked (GlcNAc...) asparagine glycans are attached at residues asparagine 382 and asparagine 396. Residues 399 to 419 (FWIPCGISLFIGAICIVLVIY) form a helical membrane-spanning segment. Topologically, residues 420–440 (EIFKISRNLSKDNKPLMFQIR) are cytoplasmic. Residues 441 to 461 (PFLCVLLVGGSFLYLFIFYFN) traverse the membrane as a helical segment. Residues 462 to 496 (NERNLDKYKAAIPSYVQCLLSSDENGEDCLTDGPG) lie on the Extracellular side of the membrane. The chain crosses the membrane as a helical span at residues 497–517 (FGAYFTFYFFTRLFGITSFSI). At 518–635 (YGTSKIARDI…SSKDSNTNSF (118 aa)) the chain is on the cytoplasmic side. Over residues 559 to 594 (SISGSNQKRFNRNGSNFNMKQNKSNPNDSISLSVVE) the composition is skewed to polar residues. The tract at residues 559–635 (SISGSNQKRF…SSKDSNTNSF (77 aa)) is disordered. Residues 594 to 623 (ESTKKQDTENELESNIETKENRSTDISIEN) are a coiled coil. Residues 623-635 (NTTSSKDSNTNSF) show a composition bias toward low complexity.

It belongs to the G-protein coupled receptor Fz/Smo family.

It is found in the membrane. This Dictyostelium discoideum (Social amoeba) protein is Frizzled and smoothened-like protein C (fslC).